We begin with the raw amino-acid sequence, 765 residues long: 5-methyltetrahydropteroyltriglutamate--homocysteine methyltransferase (765 aa).

Residues 18–21 (REWK) and K114 contribute to the 5-methyltetrahydropteroyltri-L-glutamate site. Residues 437 to 439 (IGS) and E490 contribute to the L-homocysteine site. Residues 437 to 439 (IGS) and E490 contribute to the L-methionine site. Position 567 (W567) interacts with 5-methyltetrahydropteroyltri-L-glutamate. D605 is an L-homocysteine binding site. D605 provides a ligand contact to L-methionine. 5-methyltetrahydropteroyltri-L-glutamate is bound at residue E611. 3 residues coordinate Zn(2+): H647, C649, and E671. Catalysis depends on H700, which acts as the Proton donor. Zn(2+) is bound at residue C732.

The protein belongs to the vitamin-B12 independent methionine synthase family. Zn(2+) serves as cofactor.

The catalysed reaction is 5-methyltetrahydropteroyltri-L-glutamate + L-homocysteine = tetrahydropteroyltri-L-glutamate + L-methionine. It participates in amino-acid biosynthesis; L-methionine biosynthesis via de novo pathway; L-methionine from L-homocysteine (MetE route): step 1/1. Functionally, catalyzes the transfer of a methyl group from 5-methyltetrahydrofolate to homocysteine resulting in methionine formation. The sequence is that of 5-methyltetrahydropteroyltriglutamate--homocysteine methyltransferase from Listeria monocytogenes serotype 4b (strain F2365).